The following is a 355-amino-acid chain: Phenylalanine--tRNA ligase alpha subunit (355 aa).

A Mg(2+)-binding site is contributed by Glu273.

It belongs to the class-II aminoacyl-tRNA synthetase family. Phe-tRNA synthetase alpha subunit type 1 subfamily. As to quaternary structure, tetramer of two alpha and two beta subunits. Mg(2+) serves as cofactor.

It localises to the cytoplasm. The enzyme catalyses tRNA(Phe) + L-phenylalanine + ATP = L-phenylalanyl-tRNA(Phe) + AMP + diphosphate + H(+). The sequence is that of Phenylalanine--tRNA ligase alpha subunit from Bifidobacterium animalis subsp. lactis (strain AD011).